A 329-amino-acid chain; its full sequence is uncharacterized protein (329 aa).

The tract at residues 109–147 (KALGNDQTSSMTSSTTAVTVAKSGDGQQQTGEQKEEDWK) is disordered. The span at 116–131 (TSSMTSSTTAVTVAKS) shows a compositional bias: low complexity.

It to the C-terminal of MG321/MPN_456.

This is an uncharacterized protein from Mycoplasma pneumoniae (strain ATCC 29342 / M129 / Subtype 1) (Mycoplasmoides pneumoniae).